The primary structure comprises 432 residues: Adenylosuccinate synthetase (432 aa).

Residues 12–18 (GDEGKGK) and 40–42 (GHT) contribute to the GTP site. Asp13 acts as the Proton acceptor in catalysis. Mg(2+)-binding residues include Asp13 and Gly40. IMP is bound by residues 13–16 (DEGK), 38–41 (NAGH), Thr130, Arg144, Gln225, Thr240, and Arg304. Residue His41 is the Proton donor of the active site. 300 to 306 (STTGRPR) lines the substrate pocket. GTP contacts are provided by residues Arg306, 332-334 (KLD), and 414-416 (SVG).

This sequence belongs to the adenylosuccinate synthetase family. In terms of assembly, homodimer. It depends on Mg(2+) as a cofactor.

The protein localises to the cytoplasm. The enzyme catalyses IMP + L-aspartate + GTP = N(6)-(1,2-dicarboxyethyl)-AMP + GDP + phosphate + 2 H(+). Its pathway is purine metabolism; AMP biosynthesis via de novo pathway; AMP from IMP: step 1/2. In terms of biological role, plays an important role in the de novo pathway of purine nucleotide biosynthesis. Catalyzes the first committed step in the biosynthesis of AMP from IMP. In Citrifermentans bemidjiense (strain ATCC BAA-1014 / DSM 16622 / JCM 12645 / Bem) (Geobacter bemidjiensis), this protein is Adenylosuccinate synthetase.